A 70-amino-acid chain; its full sequence is Large ribosomal subunit protein eL24 (70 aa).

Zn(2+) contacts are provided by Cys6, Cys9, Cys32, and Cys36. The C4-type zinc finger occupies 6–36 (CSYCGRPIPPGYGIMYVRVDGVVLRFCSRRC).

It belongs to the eukaryotic ribosomal protein eL24 family. Part of the 50S ribosomal subunit. Forms a cluster with proteins L3 and L14. The cofactor is Zn(2+).

Binds to the 23S rRNA. This chain is Large ribosomal subunit protein eL24, found in Caldivirga maquilingensis (strain ATCC 700844 / DSM 13496 / JCM 10307 / IC-167).